We begin with the raw amino-acid sequence, 100 residues long: Small ribosomal subunit protein uS14c (100 aa).

The protein belongs to the universal ribosomal protein uS14 family. Part of the 30S ribosomal subunit.

It is found in the plastid. Its subcellular location is the chloroplast. Binds 16S rRNA, required for the assembly of 30S particles. The protein is Small ribosomal subunit protein uS14c of Stigeoclonium helveticum (Green alga).